Reading from the N-terminus, the 324-residue chain is ATP phosphoribosyltransferase regulatory subunit (324 aa).

Belongs to the class-II aminoacyl-tRNA synthetase family. HisZ subfamily. In terms of assembly, heteromultimer composed of HisG and HisZ subunits.

The protein resides in the cytoplasm. The protein operates within amino-acid biosynthesis; L-histidine biosynthesis; L-histidine from 5-phospho-alpha-D-ribose 1-diphosphate: step 1/9. Functionally, required for the first step of histidine biosynthesis. May allow the feedback regulation of ATP phosphoribosyltransferase activity by histidine. The chain is ATP phosphoribosyltransferase regulatory subunit from Carboxydothermus hydrogenoformans (strain ATCC BAA-161 / DSM 6008 / Z-2901).